An 875-amino-acid polypeptide reads, in one-letter code: Peptidyl-glycine alpha-amidating monooxygenase B (875 aa).

The first 39 residues, 1–39 (MDMASLISSLLVLFLIFQNSCYCFRSPLSVFKRYEESTR), serve as a signal peptide directing secretion. Residues 3 to 394 (MASLISSLLV…KREEEEVLNQ (392 aa)) are peptidylglycine alpha-hydroxylating monooxygenase. At 40–763 (SLSNDCLGTT…PSVVQESSAG (724 aa)) the chain is on the intragranular side. 5 disulfides stabilise this stretch: C45–C184, C79–C124, C112–C129, C225–C332, and C291–C313. The Cu(2+) site is built by H105 and H106. Residues H170, H240, H242, and M312 each coordinate Cu(2+). The interval 395-716 (DVHLEEDTDW…SPSKAEHRSV (322 aa)) is peptidyl-alpha-hydroxyglycine alpha-amidating lyase. R430 provides a ligand contact to a protein. N465 carries N-linked (GlcNAc...) asparagine glycosylation. NHL repeat units follow at residues 467–508 (SKVL…VGAE), 516–561 (LGRA…FSPN), and 569–613 (GEET…FHAK). 2 disulfide bridges follow: C530/C551 and C598/C609. Residues Y550 and R602 each contribute to the a protein site. An N-linked (GlcNAc...) asparagine glycan is attached at N662. The NHL 4 repeat unit spans residues 666–709 (GDILDTFIPARKNFEMPHDIAAGDDGTVYVGDAHANAVWKFSPS). The segment at 735–755 (HMRSRPKTNESVGQQTQEKPS) is disordered. N743 carries N-linked (GlcNAc...) asparagine glycosylation. Residues 743-755 (NESVGQQTQEKPS) show a composition bias toward polar residues. Residues 764 to 787 (VSFVLIITLLIIPVVVLIAIAIFI) traverse the membrane as a helical segment. The Cytoplasmic segment spans residues 788–875 (RWRKVRMYGG…APPIPPVSSS (88 aa)). Residues 837 to 875 (KGFDRLSTEGSDQEKDDDDDGSDSEEEYSAPPIPPVSSS) are disordered. Positions 850-864 (EKDDDDDGSDSEEEY) are enriched in acidic residues.

This sequence in the C-terminal section; belongs to the peptidyl-alpha-hydroxyglycine alpha-amidating lyase family. In the N-terminal section; belongs to the copper type II ascorbate-dependent monooxygenase family. As to quaternary structure, monomer. Requires Zn(2+) as cofactor. Cu(2+) serves as cofactor.

The protein resides in the cytoplasmic vesicle. Its subcellular location is the secretory vesicle membrane. The catalysed reaction is a [peptide]-C-terminal glycine + 2 L-ascorbate + O2 = a [peptide]-C-terminal (2S)-2-hydroxyglycine + 2 monodehydro-L-ascorbate radical + H2O. The enzyme catalyses a [peptide]-C-terminal (2S)-2-hydroxyglycine = a [peptide]-C-terminal amide + glyoxylate. Its function is as follows. Bifunctional enzyme that catalyzes amidation of the C-terminus of proteins. Alpha-amidation is present at the C-terminus of many endocrine hormones and neuropeptides and is required for their activity. C-terminal amidation also takes place in response to protein fragmentation triggered by oxidative stress, promoting degradation of amidated protein fragments by the proteasome. Alpha-amidation involves two sequential reactions, both of which are catalyzed by separate catalytic domains of the enzyme. The first step, catalyzed by peptidyl alpha-hydroxylating monooxygenase (PHM) domain, is the copper-, ascorbate-, and O2- dependent stereospecific hydroxylation (with S stereochemistry) at the alpha-carbon (C-alpha) of the C-terminal glycine of the peptidylglycine substrate. The second step, catalyzed by the peptidylglycine amidoglycolate lyase (PAL) domain, is the zinc-dependent cleavage of the N-C-alpha bond, producing the alpha-amidated peptide and glyoxylate. The chain is Peptidyl-glycine alpha-amidating monooxygenase B (pam-b) from Xenopus laevis (African clawed frog).